Reading from the N-terminus, the 198-residue chain is Ribonuclease HII (198 aa).

An RNase H type-2 domain is found at 10–198 (QLVAGVDEVG…PVKRALGLAS (189 aa)). A divalent metal cation-binding residues include Asp-16, Glu-17, and Asp-108.

This sequence belongs to the RNase HII family. Mn(2+) is required as a cofactor. It depends on Mg(2+) as a cofactor.

The protein localises to the cytoplasm. It catalyses the reaction Endonucleolytic cleavage to 5'-phosphomonoester.. In terms of biological role, endonuclease that specifically degrades the RNA of RNA-DNA hybrids. This chain is Ribonuclease HII, found in Shigella sonnei (strain Ss046).